The sequence spans 232 residues: Phosphatidylserine decarboxylase proenzyme (232 aa).

Ser-190 (schiff-base intermediate with substrate; via pyruvic acid) is an active-site residue. Ser-190 is subject to Pyruvic acid (Ser); by autocatalysis.

The protein belongs to the phosphatidylserine decarboxylase family. PSD-A subfamily. Heterodimer of a large membrane-associated beta subunit and a small pyruvoyl-containing alpha subunit. It depends on pyruvate as a cofactor. Post-translationally, is synthesized initially as an inactive proenzyme. Formation of the active enzyme involves a self-maturation process in which the active site pyruvoyl group is generated from an internal serine residue via an autocatalytic post-translational modification. Two non-identical subunits are generated from the proenzyme in this reaction, and the pyruvate is formed at the N-terminus of the alpha chain, which is derived from the carboxyl end of the proenzyme. The post-translation cleavage follows an unusual pathway, termed non-hydrolytic serinolysis, in which the side chain hydroxyl group of the serine supplies its oxygen atom to form the C-terminus of the beta chain, while the remainder of the serine residue undergoes an oxidative deamination to produce ammonia and the pyruvoyl prosthetic group on the alpha chain.

It localises to the cell membrane. It carries out the reaction a 1,2-diacyl-sn-glycero-3-phospho-L-serine + H(+) = a 1,2-diacyl-sn-glycero-3-phosphoethanolamine + CO2. It functions in the pathway phospholipid metabolism; phosphatidylethanolamine biosynthesis; phosphatidylethanolamine from CDP-diacylglycerol: step 2/2. In terms of biological role, catalyzes the formation of phosphatidylethanolamine (PtdEtn) from phosphatidylserine (PtdSer). The sequence is that of Phosphatidylserine decarboxylase proenzyme from Bartonella henselae (strain ATCC 49882 / DSM 28221 / CCUG 30454 / Houston 1) (Rochalimaea henselae).